Consider the following 471-residue polypeptide: Type 2 glycosyltransferase (471 aa).

The helical transmembrane segment at 4–24 (ILGWFWAFVSAFVLRYLRTIV) threads the bilayer. N-linked (GlcNAc...) asparagine glycosylation is found at Asn-29, Asn-88, and Asn-222. 3 consecutive transmembrane segments (helical) span residues 305-325 (CLQTTITAWALPWDAFLFYSL), 339-359 (MAFTLLFLWIFGFTKNVKLWG), and 368-388 (VIYIPVHIAFGYFHGLIKFWG). Asn-458 carries an N-linked (GlcNAc...) asparagine glycan.

This sequence belongs to the GT2 glycosyltransferase family.

The protein resides in the cell membrane. In terms of biological role, glycosyltransferase involved in the maintenance of the outermost surface of the fungal cell wall. Likely functions in the synthesis of a currently unknown, potentially minor but widespread, extracellular or outer cell wall polysaccharide which plays a key role in facilitating many interactions between plants and fungi by enabling hyphal growth on solid matrices. In Zymoseptoria tritici (strain CBS 115943 / IPO323) (Speckled leaf blotch fungus), this protein is Type 2 glycosyltransferase.